The following is a 255-amino-acid chain: MQDKSVREIKEIIETLEVEKYMEYIELLRVDERKSVQGLAIKLAKKLDNIRKEEERLETINIFENEGYDKGYLYIGGIDEAGRGPLAGPVVASVVVFKKDTKIEGVNDSKKLSEAKRDELFEVIKEEALDYGIGIVNNEEIDEFNILNATYMAMKKAINCLKKAPDYLLVDAATIPGIDISQNPIVKGDSKSISIAAASILAKVTRDSIMYQYDRVYPEYGFKSHKGYGTKEHYEAIEKYGITPIHRKSFLKNIL.

The region spanning 73–255 (LYIGGIDEAG…HRKSFLKNIL (183 aa)) is the RNase H type-2 domain. Asp-79, Glu-80, and Asp-171 together coordinate a divalent metal cation.

Belongs to the RNase HII family. Requires Mn(2+) as cofactor. Mg(2+) is required as a cofactor.

The protein localises to the cytoplasm. It carries out the reaction Endonucleolytic cleavage to 5'-phosphomonoester.. Its function is as follows. Endonuclease that specifically degrades the RNA of RNA-DNA hybrids. In Clostridioides difficile (strain 630) (Peptoclostridium difficile), this protein is Ribonuclease HII.